A 131-amino-acid chain; its full sequence is Hypocretin neuropeptide precursor (131 aa).

Residues 1–33 (MNPPFAKVSWATVTLLLLLLLLPPAVLSPGAAA) form the signal peptide. At glutamine 34 the chain carries Pyrrolidone carboxylic acid. 2 disulfides stabilise this stretch: cysteine 39/cysteine 45 and cysteine 40/cysteine 47. Leucine amide is present on leucine 66. Methionine 97 is modified (methionine amide). Positions 98–131 (GRRAGAEPAPRLCPGRRCLAAAASSVAPGGRSGI) are cleaved as a propeptide — removed in mature form.

This sequence belongs to the orexin family. Post-translationally, specific enzymatic cleavages at paired basic residues yield the different active peptides.

It localises to the rough endoplasmic reticulum. Its subcellular location is the cytoplasmic vesicle. The protein resides in the synapse. In terms of biological role, neuropeptides that play a significant role in the regulation of food intake and sleep-wakefulness, possibly by coordinating the complex behavioral and physiologic responses of these complementary homeostatic functions. A broader role in the homeostatic regulation of energy metabolism, autonomic function, hormonal balance and the regulation of body fluids, is also suggested. Binds to orexin receptors HCRTR1/OX1R and HCRTR2/OX2R with a high affinity. Stimulates food intake. Modulates pituitary luteinizing hormone secretion in an ovarian steroid-dependent manner. Its function is as follows. Binds to orexin receptor HCRTR2/OX2R only. Stimulates food intake. Modulates pituitary luteinizing hormone secretion in an ovarian steroid-dependent manner. In Sus scrofa (Pig), this protein is Hypocretin neuropeptide precursor (HCRT).